Reading from the N-terminus, the 417-residue chain is Citrate synthase-related protein DDB_G0287281 (417 aa).

The segment at 284 to 317 (NKNNNNNNNNNNNNNNNNNNNNNNNNSEDDDDDN) is disordered. Low complexity predominate over residues 286–309 (NNNNNNNNNNNNNNNNNNNNNNNN).

This sequence belongs to the citrate synthase family.

The polypeptide is Citrate synthase-related protein DDB_G0287281 (Dictyostelium discoideum (Social amoeba)).